Consider the following 1374-residue polypeptide: DNA-directed RNA polymerase subunit beta (1374 aa).

The protein belongs to the RNA polymerase beta chain family. In terms of assembly, the RNAP catalytic core consists of 2 alpha, 1 beta, 1 beta' and 1 omega subunit. When a sigma factor is associated with the core the holoenzyme is formed, which can initiate transcription.

The enzyme catalyses RNA(n) + a ribonucleoside 5'-triphosphate = RNA(n+1) + diphosphate. DNA-dependent RNA polymerase catalyzes the transcription of DNA into RNA using the four ribonucleoside triphosphates as substrates. This chain is DNA-directed RNA polymerase subunit beta, found in Rickettsia prowazekii (strain Madrid E).